We begin with the raw amino-acid sequence, 78 residues long: Large ribosomal subunit protein bL28 (78 aa).

It belongs to the bacterial ribosomal protein bL28 family.

The protein is Large ribosomal subunit protein bL28 of Trichodesmium erythraeum (strain IMS101).